Consider the following 316-residue polypeptide: Ornithine carbamoyltransferase (316 aa).

Residues 57–60 (STRT), Q84, R108, and 135–138 (HPCQ) each bind carbamoyl phosphate. Residues N166, D230, and 234–235 (SM) each bind L-ornithine. Carbamoyl phosphate-binding positions include 269-270 (CL) and R297.

It belongs to the aspartate/ornithine carbamoyltransferase superfamily. OTCase family.

It localises to the cytoplasm. It carries out the reaction carbamoyl phosphate + L-ornithine = L-citrulline + phosphate + H(+). It functions in the pathway amino-acid biosynthesis; L-arginine biosynthesis; L-arginine from L-ornithine and carbamoyl phosphate: step 1/3. Its function is as follows. Reversibly catalyzes the transfer of the carbamoyl group from carbamoyl phosphate (CP) to the N(epsilon) atom of ornithine (ORN) to produce L-citrulline. The protein is Ornithine carbamoyltransferase of Bacillus thuringiensis subsp. konkukian (strain 97-27).